Here is a 46-residue protein sequence, read N- to C-terminus: Esculentin-1R (46 aa).

C40 and C46 are joined by a disulfide.

As to expression, expressed by the skin glands.

The protein resides in the secreted. In terms of biological role, shows antibacterial activity against representative Gram-negative and Gram-positive bacterial species, and hemolytic activity. In Pelophylax ridibundus (Marsh frog), this protein is Esculentin-1R.